The following is a 67-amino-acid chain: Large ribosomal subunit protein bL35 (67 aa).

Belongs to the bacterial ribosomal protein bL35 family.

This chain is Large ribosomal subunit protein bL35, found in Sinorhizobium fredii (strain NBRC 101917 / NGR234).